The sequence spans 361 residues: MSPECARAAGDAPLRSLEQANRTRFSFFSDVKGDHRLLLAAVETTVLALIFAVSLLGNVCALVLVARRRRRGTTACLVLNLFCADLLFISAIPLVLAVRWTEAWLLGPVACHLLFYLMTLSGSVTILTLAAVSLERMVCIVHLQRGVRGPGRRARAVLLTLIWGYSAVAALPLCVFFRVVPQRLPGADQEISICTLIWPTIAGEISWDVSFVTLNFLVPGLVIVISYSKILQITKASRKRLTVSLAYSESHQIRVSQQDFRLFRTLFLLMVSFFIMWSPIIITILLILIQNFKQDLVIWPSLFFWVVAFTFANSALNPILYNMTLCRNEWKKIFCCFWFPEKGAILTDTSVKRNDLSVISG.

Residues 1–45 lie on the Extracellular side of the membrane; the sequence is MSPECARAAGDAPLRSLEQANRTRFSFFSDVKGDHRLLLAAVETT. A glycan (N-linked (GlcNAc...) asparagine) is linked at Asn-21. A helical transmembrane segment spans residues 46-66; that stretch reads VLALIFAVSLLGNVCALVLVA. Residues 67–77 are Cytoplasmic-facing; it reads RRRRRGTTACL. The helical transmembrane segment at 78–98 threads the bilayer; the sequence is VLNLFCADLLFISAIPLVLAV. Over 99 to 112 the chain is Extracellular; that stretch reads RWTEAWLLGPVACH. An intrachain disulfide couples Cys-111 to Cys-194. Residues 113–133 traverse the membrane as a helical segment; sequence LLFYLMTLSGSVTILTLAAVS. Residues 134–156 lie on the Cytoplasmic side of the membrane; sequence LERMVCIVHLQRGVRGPGRRARA. A helical membrane pass occupies residues 157–177; sequence VLLTLIWGYSAVAALPLCVFF. Over 178 to 204 the chain is Extracellular; sequence RVVPQRLPGADQEISICTLIWPTIAGE. A helical membrane pass occupies residues 205–225; sequence ISWDVSFVTLNFLVPGLVIVI. Residues 226–268 are Cytoplasmic-facing; it reads SYSKILQITKASRKRLTVSLAYSESHQIRVSQQDFRLFRTLFL. The chain crosses the membrane as a helical span at residues 269 to 289; it reads LMVSFFIMWSPIIITILLILI. At 290 to 295 the chain is on the extracellular side; that stretch reads QNFKQD. Residues 296-316 form a helical membrane-spanning segment; the sequence is LVIWPSLFFWVVAFTFANSAL. Residues 317–361 lie on the Cytoplasmic side of the membrane; that stretch reads NPILYNMTLCRNEWKKIFCCFWFPEKGAILTDTSVKRNDLSVISG. Residues Thr-347 and Thr-349 each carry the phosphothreonine modification. Residues Ser-350, Ser-357, and Ser-360 each carry the phosphoserine modification.

This sequence belongs to the G-protein coupled receptor 1 family. Interacts (via C-terminus) with ARRB2 following LCFAs stimulation. In terms of processing, phosphorylated at two clusters of Ser and Thr residues located in the intracellular C-terminus. Prerequisite for FFAR4 internalization via an ARRB2-dependent pathway. In terms of tissue distribution, highly expressed in lung and colon.

Its subcellular location is the cell membrane. The protein localises to the endosome membrane. It is found in the lysosome membrane. It localises to the cell projection. The protein resides in the cilium membrane. G-protein-coupled receptor for long-chain fatty acids (LCFAs) with a major role in adipogenesis, energy metabolism and inflammation. Signals via G-protein and beta-arrestin pathways. LCFAs sensing initiates activation of phosphoinositidase C-linked G proteins GNAQ and GNA11 (G(q)/G(11)), inducing a variety of cellular responses via second messenger pathways such as intracellular calcium mobilization, modulation of cyclic adenosine monophosphate (cAMP) production, and mitogen-activated protein kinases (MAPKs). After LCFAs binding, associates with beta-arrestin ARRB2 that acts as an adapter protein coupling the receptor to specific downstream signaling pathways, as well as mediating receptor endocytosis. In response to dietary fats, plays an important role in the regulation of adipocyte proliferation and differentiation. Acts as a receptor for omega-3 polyunsaturated fatty acids (PUFAs) at primary cilium of perivascular preadipocytes, initiating an adipogenic program via cAMP and CTCF-dependent chromatin remodeling that ultimately results in transcriptional activation of adipogenic genes and cell cycle entry. Induces differentiation of brown and beige adipocytes probably via autocrine and endocrine functions of FGF21 hormone. Contributes to the thermogenic activation of brown adipose tissue and the browning of white adipose tissue. Activates brown adipocytes by initiating intracellular calcium signaling leading to mitochondrial depolarization and fission, and overall increased mitochondrial respiration. Consequently stimulates fatty acid uptake and oxidation in mitochondria together with UCP1-mediated thermogenic respiration, eventually reducing fat mass. Regulates bi-potential differentiation of bone marrow mesenchymal stem cells toward osteoblasts or adipocytes likely by up-regulating distinct integrins. In response to dietary fats regulates hormone secretion and appetite. Stimulates GIP and GLP1 secretion from enteroendocrine cells as well as GCG secretion in pancreatic alpha cells, thereby playing a role in the regulation of blood glucose levels. Negatively regulates glucose-induced SST secretion in pancreatic delta cells. Mediates LCFAs inhibition of GHRL secretion, an appetite-controlling hormone. In taste buds, contributes to sensing of dietary fatty acids by the gustatory system. During the inflammatory response, promotes anti-inflammatory M2 macrophage differentiation in adipose tissue. Mediates the anti-inflammatory effects of omega-3 PUFAs via inhibition of NLRP3 inflammasome activation. In this pathway, interacts with adapter protein ARRB2 and inhibits the priming step triggered by Toll-like receptors (TLRs) at the level of TAK1 and TAB1. Further inhibits the activation step when ARRB2 directly associates with NLRP3, leading to inhibition of pro-inflammatory cytokine release. Mediates LCFAs anti-apoptotic effects. The sequence is that of Free fatty acid receptor 4 (FFAR4) from Macaca fascicularis (Crab-eating macaque).